A 154-amino-acid polypeptide reads, in one-letter code: Putative antiporter subunit mnhG2 (154 aa).

A run of 3 helical transmembrane segments spans residues 11-31 (IASI…IGIV), 51-71 (VLLT…FFSV), and 72-92 (RLLL…HLIS).

It belongs to the CPA3 antiporters (TC 2.A.63) subunit G family. As to quaternary structure, may form a heterooligomeric complex that consists of seven subunits: mnhA2, mnhB2, mnhC2, mnhD2, mnhE2, mnhF2 and mnhG2.

It localises to the cell membrane. This chain is Putative antiporter subunit mnhG2 (mnhG2), found in Staphylococcus epidermidis (strain ATCC 35984 / DSM 28319 / BCRC 17069 / CCUG 31568 / BM 3577 / RP62A).